We begin with the raw amino-acid sequence, 323 residues long: MKFWRFVQILFFLGVAAVGLVVAVMIANADDTTLFDRMQLPDGDPNKLNYYIQPAPNGNEKVPFPTIFDPASVYLSLVVPAYNEEKRLPKMLDETLNYLKSREEKDKSFTWEIVIVNDGSKDKTKEVVLNYAKEYPNIFLLNQPVNMGKGAAIQAGCLHVRGELVLMLDADGATKIDDFEVLEKEIKSLMKTTNQAIVIGSRAQNEKAKRTPLRKFLSIGMHTLIVLSGVHGIRDTQCGFKLFTRESCKMIFMNQHVQRWCCDPEILVIARRLGMKISELPVEWNEIDGSKMKISGMIKMATDLIKIAIFHRVGAWKIRDRRH.

Over Met1–Arg5 the chain is Lumenal. Residues Phe6 to Ile26 form a helical membrane-spanning segment. Residues Ala27 to His323 lie on the Cytoplasmic side of the membrane.

This sequence belongs to the glycosyltransferase 2 family.

Its subcellular location is the endoplasmic reticulum membrane. It carries out the reaction a di-trans,poly-cis-dolichyl phosphate + UDP-alpha-D-glucose = a di-trans,poly-cis-dolichyl beta-D-glucosyl phosphate + UDP. It participates in protein modification; protein glycosylation. In terms of biological role, dolichyl-phosphate beta-glucosyltransferase involved in the glycosylation of glycoproteins through the synthesis of dolichyl beta-D-glucosyl phosphate which serves as a sugar donor for transfer of three glucose residues to the Man-9-GlcNAc-2-PP-dolichol precursor to N-glycans. In Trichomonas vaginalis (strain ATCC PRA-98 / G3), this protein is Dolichyl-phosphate beta-glucosyltransferase ALG5A.